The sequence spans 287 residues: Ribosomal RNA small subunit methyltransferase A (287 aa).

S-adenosyl-L-methionine contacts are provided by asparagine 28, leucine 30, glycine 55, glutamate 77, aspartate 103, and asparagine 123.

It belongs to the class I-like SAM-binding methyltransferase superfamily. rRNA adenine N(6)-methyltransferase family. RsmA subfamily.

It localises to the cytoplasm. It carries out the reaction adenosine(1518)/adenosine(1519) in 16S rRNA + 4 S-adenosyl-L-methionine = N(6)-dimethyladenosine(1518)/N(6)-dimethyladenosine(1519) in 16S rRNA + 4 S-adenosyl-L-homocysteine + 4 H(+). Its function is as follows. Specifically dimethylates two adjacent adenosines (A1518 and A1519) in the loop of a conserved hairpin near the 3'-end of 16S rRNA in the 30S particle. May play a critical role in biogenesis of 30S subunits. In Rhodopseudomonas palustris (strain BisA53), this protein is Ribosomal RNA small subunit methyltransferase A.